Reading from the N-terminus, the 458-residue chain is Peptidyl-prolyl cis-trans isomerase FKBP4 (458 aa).

Met-1 is modified (N-acetylmethionine; in peptidyl-prolyl cis-trans isomerase FKBP4; alternate). Positions Met-1 to Asp-24 are disordered. Thr-2 bears the N-acetylthreonine; in peptidyl-prolyl cis-trans isomerase FKBP4, N-terminally processed; partial mark. Residues Gly-50–Lys-138 form the PPIase FKBP-type 1 domain. Residue Thr-143 is modified to Phosphothreonine; by CK2. The PPIase FKBP-type 2 domain occupies Gly-167–Glu-253. A Phosphotyrosine modification is found at Tyr-220. The segment at Leu-267–Thr-400 is interaction with tubulin. TPR repeat units lie at residues Ser-270–Glu-303, Leu-319–Asn-352, and Glu-353–Asn-386. At Lys-282 the chain carries N6-acetyllysine. Omega-N-methylarginine is present on Arg-373. Positions Glu-428–Ala-458 are disordered. Positions His-434 to Ala-458 are enriched in basic and acidic residues. Thr-436 carries the phosphothreonine modification. Lys-441 is covalently cross-linked (Glycyl lysine isopeptide (Lys-Gly) (interchain with G-Cter in SUMO1)). Position 452 is a phosphoserine (Ser-452).

As to quaternary structure, homodimer. Interacts with GLMN. Associates with HSP90AA1 and HSPA1A/HSPA1B in steroid hormone receptor complexes. Also interacts with peroxisomal phytanoyl-CoA alpha-hydroxylase (PHYH). Interacts with NR3C1 and dynein. Interacts with HSF1 in the HSP90 complex. Associates with tubulin. Interacts with MAPT/TAU. Interacts (via TPR domain) with S100A1, S100A2 and S100A6; the interaction is Ca(2+) dependent. Interaction with S100A1 and S100A2 (but not with S100A6) leads to inhibition of FKBP4-HSP90 interaction. Interacts with dynein; contributes to NR3C1 transport to the nucleus. In terms of processing, phosphorylation by CK2 results in loss of HSP90 binding activity.

It localises to the cytoplasm. The protein localises to the cytosol. It is found in the mitochondrion. Its subcellular location is the nucleus. The protein resides in the cytoskeleton. The enzyme catalyses [protein]-peptidylproline (omega=180) = [protein]-peptidylproline (omega=0). With respect to regulation, inhibited by FK506. In terms of biological role, immunophilin protein with PPIase and co-chaperone activities. Component of steroid receptors heterocomplexes through interaction with heat-shock protein 90 (HSP90). May play a role in the intracellular trafficking of heterooligomeric forms of steroid hormone receptors between cytoplasm and nuclear compartments. The isomerase activity controls neuronal growth cones via regulation of TRPC1 channel opening. Also acts as a regulator of microtubule dynamics by inhibiting MAPT/TAU ability to promote microtubule assembly. May have a protective role against oxidative stress in mitochondria. The polypeptide is Peptidyl-prolyl cis-trans isomerase FKBP4 (Fkbp4) (Mus musculus (Mouse)).